Reading from the N-terminus, the 242-residue chain is Ras-like protein family member 11A (242 aa).

Residues 17–241 (ESSSDYLLPK…SSKAKAASTL (225 aa)) form a small GTPase-like region. Residues 34–41 (GASCVGKS), 81–85 (DTPGG), and 147–150 (NKGD) contribute to the GTP site.

Belongs to the small GTPase superfamily. Ras family. In terms of assembly, interacts with UBF/UBTF.

It is found in the nucleus. The protein localises to the nucleolus. The enzyme catalyses GTP + H2O = GDP + phosphate + H(+). Regulator of rDNA transcription. Acts in cooperation UBF/UBTF and positively regulates RNA polymerase I transcription. This is Ras-like protein family member 11A from Rattus norvegicus (Rat).